The following is a 166-amino-acid chain: Phosphopantetheine adenylyltransferase (166 aa).

Residue Ser-11 participates in substrate binding. ATP is bound by residues 11–12 and His-19; that span reads SF. Substrate-binding residues include Lys-43, Ala-76, and Arg-90. ATP is bound by residues 91 to 93, Glu-101, and 126 to 132; these read GLR and MQPISSS.

Belongs to the bacterial CoaD family. Homohexamer. Mg(2+) is required as a cofactor.

It is found in the cytoplasm. The enzyme catalyses (R)-4'-phosphopantetheine + ATP + H(+) = 3'-dephospho-CoA + diphosphate. Its pathway is cofactor biosynthesis; coenzyme A biosynthesis; CoA from (R)-pantothenate: step 4/5. Functionally, reversibly transfers an adenylyl group from ATP to 4'-phosphopantetheine, yielding dephospho-CoA (dPCoA) and pyrophosphate. The chain is Phosphopantetheine adenylyltransferase from Streptococcus uberis (strain ATCC BAA-854 / 0140J).